A 213-amino-acid polypeptide reads, in one-letter code: UPF0301 protein Aave_0907 (213 aa).

The segment at M93–A120 is disordered.

This sequence belongs to the UPF0301 (AlgH) family.

The sequence is that of UPF0301 protein Aave_0907 from Paracidovorax citrulli (strain AAC00-1) (Acidovorax citrulli).